The sequence spans 130 residues: Small ribosomal subunit protein uS9 (130 aa).

Belongs to the universal ribosomal protein uS9 family.

The protein is Small ribosomal subunit protein uS9 of Polaromonas naphthalenivorans (strain CJ2).